A 276-amino-acid chain; its full sequence is NAD kinase (276 aa).

The active-site Proton acceptor is the Asp61. Residues 61 to 62 (DG), 134 to 135 (ND), Arg145, Lys162, Asp164, Val172, 175 to 180 (TAYSFS), and Gln234 each bind NAD(+).

The protein belongs to the NAD kinase family. It depends on a divalent metal cation as a cofactor.

Its subcellular location is the cytoplasm. The catalysed reaction is NAD(+) + ATP = ADP + NADP(+) + H(+). Functionally, involved in the regulation of the intracellular balance of NAD and NADP, and is a key enzyme in the biosynthesis of NADP. Catalyzes specifically the phosphorylation on 2'-hydroxyl of the adenosine moiety of NAD to yield NADP. The chain is NAD kinase from Clostridium perfringens (strain ATCC 13124 / DSM 756 / JCM 1290 / NCIMB 6125 / NCTC 8237 / Type A).